Here is a 100-residue protein sequence, read N- to C-terminus: MLEHVLIISAYLFSIGIYGLITSRNMVRALMCLELILNAVNMNFVTFSDFFDSRQLKGNIFSIFVIAIAAAEAAIGPAILSSIYRNRKSTRINQSNLLNK.

A run of 3 helical transmembrane segments spans residues 1–21 (MLEHVLIISAYLFSIGIYGLI), 31–51 (MCLELILNAVNMNFVTFSDFF), and 60–80 (IFSIFVIAIAAAEAAIGPAIL).

The protein belongs to the complex I subunit 4L family. In terms of assembly, NDH is composed of at least 16 different subunits, 5 of which are encoded in the nucleus.

The protein resides in the plastid. The protein localises to the chloroplast thylakoid membrane. The catalysed reaction is a plastoquinone + NADH + (n+1) H(+)(in) = a plastoquinol + NAD(+) + n H(+)(out). It carries out the reaction a plastoquinone + NADPH + (n+1) H(+)(in) = a plastoquinol + NADP(+) + n H(+)(out). Its function is as follows. NDH shuttles electrons from NAD(P)H:plastoquinone, via FMN and iron-sulfur (Fe-S) centers, to quinones in the photosynthetic chain and possibly in a chloroplast respiratory chain. The immediate electron acceptor for the enzyme in this species is believed to be plastoquinone. Couples the redox reaction to proton translocation, and thus conserves the redox energy in a proton gradient. In Cucumis sativus (Cucumber), this protein is NAD(P)H-quinone oxidoreductase subunit 4L, chloroplastic.